The chain runs to 496 residues: Apolipoprotein N-acyltransferase (496 aa).

6 consecutive transmembrane segments (helical) span residues 6-26, 50-70, 77-97, 114-134, 148-168, and 183-203; these read IICF…FFIP, FGYL…SIGV, FWWA…FFIS, LIFC…CTGL, ILIQ…VIYI, and LKIL…YGAM. The CN hydrolase domain occupies 220-464; the sequence is VQPSIPQTAK…QGLIPQKLTT (245 aa). The active-site Proton acceptor is Glu259. Lys322 is an active-site residue. Catalysis depends on Cys372, which acts as the Nucleophile. A helical membrane pass occupies residues 474–494; the sequence is FAMLLPIVFILLIHYLLSLIF.

This sequence belongs to the CN hydrolase family. Apolipoprotein N-acyltransferase subfamily.

Its subcellular location is the cell inner membrane. The catalysed reaction is N-terminal S-1,2-diacyl-sn-glyceryl-L-cysteinyl-[lipoprotein] + a glycerophospholipid = N-acyl-S-1,2-diacyl-sn-glyceryl-L-cysteinyl-[lipoprotein] + a 2-acyl-sn-glycero-3-phospholipid + H(+). It functions in the pathway protein modification; lipoprotein biosynthesis (N-acyl transfer). Its function is as follows. Catalyzes the phospholipid dependent N-acylation of the N-terminal cysteine of apolipoprotein, the last step in lipoprotein maturation. This is Apolipoprotein N-acyltransferase from Rickettsia typhi (strain ATCC VR-144 / Wilmington).